The primary structure comprises 476 residues: RuvB-like helicase 2 (476 aa).

76-83 contacts ATP; that stretch reads GPPSTGKT.

The protein belongs to the RuvB family. As to quaternary structure, may form heterododecamers with RVB1. Component of the SWR1 chromatin remodeling complex, the INO80 chromatin remodeling complex, and of the R2TP complex.

It is found in the nucleus. The enzyme catalyses ATP + H2O = ADP + phosphate + H(+). Functionally, DNA helicase which participates in several chromatin remodeling complexes, including the SWR1 and the INO80 complexes. The SWR1 complex mediates the ATP-dependent exchange of histone H2A for the H2A variant HZT1 leading to transcriptional regulation of selected genes by chromatin remodeling. The INO80 complex remodels chromatin by shifting nucleosomes and is involved in DNA repair. Also involved in pre-rRNA processing. The chain is RuvB-like helicase 2 (RVB2) from Candida glabrata (strain ATCC 2001 / BCRC 20586 / JCM 3761 / NBRC 0622 / NRRL Y-65 / CBS 138) (Yeast).